Here is a 320-residue protein sequence, read N- to C-terminus: Cytochrome f (320 aa).

The N-terminal stretch at 1–35 (MQTRNTFSWIKEQITRSISASLMIYIITRTSISNA) is a signal peptide. Y36, C56, C59, and H60 together coordinate heme. A helical transmembrane segment spans residues 286 to 306 (VQGLLFFFAAVILAQIFLVLK).

The protein belongs to the cytochrome f family. The 4 large subunits of the cytochrome b6-f complex are cytochrome b6, subunit IV (17 kDa polypeptide, petD), cytochrome f and the Rieske protein, while the 4 small subunits are PetG, PetL, PetM and PetN. The complex functions as a dimer. Heme is required as a cofactor.

The protein localises to the plastid. It is found in the chloroplast thylakoid membrane. Component of the cytochrome b6-f complex, which mediates electron transfer between photosystem II (PSII) and photosystem I (PSI), cyclic electron flow around PSI, and state transitions. This Helianthus annuus (Common sunflower) protein is Cytochrome f.